The chain runs to 277 residues: Large ribosomal subunit protein uL2 (277 aa).

Disordered stretches follow at residues 37–60 (KNSTAGRNNNGHITTRHKGGGHKH) and 223–264 (VVMN…NKRT). The span at 39-49 (STAGRNNNGHI) shows a compositional bias: polar residues. Basic residues predominate over residues 50 to 60 (TTRHKGGGHKH). Residues 229–244 (DHPHGGGEGRTGEARE) are compositionally biased toward basic and acidic residues.

Belongs to the universal ribosomal protein uL2 family. As to quaternary structure, part of the 50S ribosomal subunit. Forms a bridge to the 30S subunit in the 70S ribosome.

Functionally, one of the primary rRNA binding proteins. Required for association of the 30S and 50S subunits to form the 70S ribosome, for tRNA binding and peptide bond formation. It has been suggested to have peptidyltransferase activity; this is somewhat controversial. Makes several contacts with the 16S rRNA in the 70S ribosome. The protein is Large ribosomal subunit protein uL2 of Neisseria gonorrhoeae (strain ATCC 700825 / FA 1090).